We begin with the raw amino-acid sequence, 307 residues long: Ribosomal protein L11 methyltransferase (307 aa).

Thr162, Gly183, Asp205, and Asn244 together coordinate S-adenosyl-L-methionine.

The protein belongs to the methyltransferase superfamily. PrmA family.

It is found in the cytoplasm. The catalysed reaction is L-lysyl-[protein] + 3 S-adenosyl-L-methionine = N(6),N(6),N(6)-trimethyl-L-lysyl-[protein] + 3 S-adenosyl-L-homocysteine + 3 H(+). Its function is as follows. Methylates ribosomal protein L11. The polypeptide is Ribosomal protein L11 methyltransferase (Bordetella parapertussis (strain 12822 / ATCC BAA-587 / NCTC 13253)).